Here is a 414-residue protein sequence, read N- to C-terminus: Glutamyl-tRNA reductase (414 aa).

Substrate contacts are provided by residues 49-52 (TCNR), S108, 113-115 (EPQ), and Q119. Residue C50 is the Nucleophile of the active site. 188–193 (GAGQTG) provides a ligand contact to NADP(+).

This sequence belongs to the glutamyl-tRNA reductase family. Homodimer.

It catalyses the reaction (S)-4-amino-5-oxopentanoate + tRNA(Glu) + NADP(+) = L-glutamyl-tRNA(Glu) + NADPH + H(+). Its pathway is porphyrin-containing compound metabolism; protoporphyrin-IX biosynthesis; 5-aminolevulinate from L-glutamyl-tRNA(Glu): step 1/2. Functionally, catalyzes the NADPH-dependent reduction of glutamyl-tRNA(Glu) to glutamate 1-semialdehyde (GSA). This chain is Glutamyl-tRNA reductase, found in Francisella tularensis subsp. holarctica (strain LVS).